The sequence spans 87 residues: MKTKLNELLEFPCVFTYKVMGEAKPELVDLVVEVVQRHAPGDYTPQIKPSSKGNYHSVSITITATHIEQVETLYEELGNIDIVRMVL.

This sequence belongs to the UPF0250 family.

The protein is UPF0250 protein PC1_1177 of Pectobacterium carotovorum subsp. carotovorum (strain PC1).